The following is a 328-amino-acid chain: Cell division protein ZipA (328 aa).

The Periplasmic portion of the chain corresponds to 1-4; the sequence is MDLN. Residues 5–25 form a helical membrane-spanning segment; it reads TILIIVGIVALVALIVHGLWS. Residues 26-328 lie on the Cytoplasmic side of the membrane; sequence NRREKSKYFD…NAEQAYLARV (303 aa). The disordered stretch occupies residues 43 to 82; sequence TSLTSRSHTQEEMAQPNNISPNTYVENGHTPIPQPTTEKV. Residues 57 to 67 are compositionally biased toward polar residues; the sequence is QPNNISPNTYV.

It belongs to the ZipA family. Interacts with FtsZ via their C-terminal domains.

The protein localises to the cell inner membrane. Essential cell division protein that stabilizes the FtsZ protofilaments by cross-linking them and that serves as a cytoplasmic membrane anchor for the Z ring. Also required for the recruitment to the septal ring of downstream cell division proteins. The sequence is that of Cell division protein ZipA from Haemophilus influenzae (strain PittEE).